Reading from the N-terminus, the 432-residue chain is ATP-dependent RNA helicase RhlB (432 aa).

The Q motif motif lies at 9–37 (QNFADLGLQPQVIDGLNAKGFIKCTPIQA). The 180-residue stretch at 40-219 (LPVLLAGQDI…FEHMQEPEHV (180 aa)) folds into the Helicase ATP-binding domain. 53–60 (AQTGTGKT) serves as a coordination point for ATP. The DEAD box signature appears at 165 to 168 (DEAD). The Helicase C-terminal domain occupies 245–390 (ALLQTLIEEE…QSDYDASALL (146 aa)). A disordered region spans residues 396 to 432 (PLRLQRRPQQNRRNNNGQRQGGNRKHTRPRQPRNTQS). Basic residues predominate over residues 417-426 (GNRKHTRPRQ).

The protein belongs to the DEAD box helicase family. RhlB subfamily. Component of the RNA degradosome, which is a multiprotein complex involved in RNA processing and mRNA degradation.

It localises to the cytoplasm. The enzyme catalyses ATP + H2O = ADP + phosphate + H(+). Functionally, DEAD-box RNA helicase involved in RNA degradation. Has RNA-dependent ATPase activity and unwinds double-stranded RNA. This is ATP-dependent RNA helicase RhlB from Aliivibrio fischeri (strain ATCC 700601 / ES114) (Vibrio fischeri).